The following is a 224-amino-acid chain: UPF0758 protein PLES_57141 (224 aa).

The MPN domain maps to 102 to 224 (ILESPQAVRD…PLSLAEYGWL (123 aa)). Zn(2+) is bound by residues His173, His175, and Asp186. Residues 173-186 (HNHPSGDARPSLAD) carry the JAMM motif motif.

It belongs to the UPF0758 family.

This chain is UPF0758 protein PLES_57141, found in Pseudomonas aeruginosa (strain LESB58).